A 447-amino-acid polypeptide reads, in one-letter code: Phosphoglucosamine mutase (447 aa).

Catalysis depends on S100, which acts as the Phosphoserine intermediate. Mg(2+) is bound by residues S100, D239, D241, and D243. S100 bears the Phosphoserine mark.

Belongs to the phosphohexose mutase family. The cofactor is Mg(2+). In terms of processing, activated by phosphorylation.

The enzyme catalyses alpha-D-glucosamine 1-phosphate = D-glucosamine 6-phosphate. Functionally, catalyzes the conversion of glucosamine-6-phosphate to glucosamine-1-phosphate. This Halalkalibacterium halodurans (strain ATCC BAA-125 / DSM 18197 / FERM 7344 / JCM 9153 / C-125) (Bacillus halodurans) protein is Phosphoglucosamine mutase.